The following is an 819-amino-acid chain: Transferrin 2 (819 aa).

An N-terminal signal peptide occupies residues 1–21 (MASSLVFVALVGALCFTLANA). Residues 33–373 (MVWCTKSQAE…QYDQYRSERL (341 aa)) form the Transferrin-like 1 domain. 2 disulfides stabilise this stretch: Cys-36–Cys-78 and Cys-46–Cys-69. N-linked (GlcNAc...) asparagine glycosylation is found at Asn-48 and Asn-66. Residues Asp-93 and Tyr-121 each contribute to the Fe(3+) site. 3 cysteine pairs are disulfide-bonded: Cys-147/Cys-237, Cys-190/Cys-213, and Cys-273/Cys-287. Ala-155 and Gly-156 together coordinate hydrogencarbonate. An N-linked (GlcNAc...) asparagine glycan is attached at Asn-187. Fe(3+) is bound at residue Tyr-231. The tract at residues 325-361 (GTRDDQSRQGGQSFNSRNNINDQNAYGQFDNNDPYRT) is disordered. The segment covering 332-361 (RQGGQSFNSRNNINDQNAYGQFDNNDPYRT) has biased composition (polar residues). Residue Asn-388 is glycosylated (N-linked (GlcNAc...) asparagine). A Transferrin-like 2 domain is found at 450 to 796 (MTLCVTSENE…FMRARRITDC (347 aa)). 2 disulfide bridges follow: Cys-453–Cys-490 and Cys-463–Cys-481. The Fe(3+) site is built by Asp-505 and Tyr-533. Cystine bridges form between Cys-557/Cys-646, Cys-599/Cys-621, Cys-618/Cys-629, and Cys-687/Cys-701. Hydrogencarbonate-binding residues include Thr-559, Ala-565, and Gly-566. Asn-720 carries N-linked (GlcNAc...) asparagine glycosylation. Cys-796 is lipidated: GPI-anchor amidated cysteine. A propeptide spans 797 to 819 (YAGASQLALSVGLLLVGSLVAML) (removed in mature form).

Belongs to the transferrin family. Forms a complex composed of septa junction proteins Nrx-IV/Nrx, Tsf2/MTf, Cont and Nrg during late embryogenesis.

Its subcellular location is the apicolateral cell membrane. The protein resides in the cell junction. It is found in the septate junction. In terms of biological role, iron-binding protein and component of septate junctions that form the paracellular permeability barrier in epithelial tissues. In an iron-dependent manner, required for septate junction assembly during epithelial maturation in embryos and mature septa junctions stability. This Drosophila melanogaster (Fruit fly) protein is Transferrin 2.